The primary structure comprises 245 residues: Uridylate kinase (245 aa).

Lysine 12–glycine 15 contacts ATP. Glycine 55 is a UMP binding site. 2 residues coordinate ATP: glycine 56 and arginine 60. UMP-binding positions include aspartate 76 and alanine 137–threonine 144. The ATP site is built by threonine 164, tyrosine 171, and aspartate 174.

Belongs to the UMP kinase family. In terms of assembly, homohexamer.

It localises to the cytoplasm. The catalysed reaction is UMP + ATP = UDP + ADP. It functions in the pathway pyrimidine metabolism; CTP biosynthesis via de novo pathway; UDP from UMP (UMPK route): step 1/1. With respect to regulation, inhibited by UTP. Catalyzes the reversible phosphorylation of UMP to UDP. The chain is Uridylate kinase from Chlamydia muridarum (strain MoPn / Nigg).